Reading from the N-terminus, the 151-residue chain is Cyanate hydratase (151 aa).

Active-site residues include Arg-92, Glu-95, and Ser-118.

This sequence belongs to the cyanase family.

It catalyses the reaction cyanate + hydrogencarbonate + 3 H(+) = NH4(+) + 2 CO2. Functionally, catalyzes the reaction of cyanate with bicarbonate to produce ammonia and carbon dioxide. In Coprinopsis cinerea (strain Okayama-7 / 130 / ATCC MYA-4618 / FGSC 9003) (Inky cap fungus), this protein is Cyanate hydratase.